A 326-amino-acid polypeptide reads, in one-letter code: Probable cell division protein WhiA (326 aa).

The segment at residues 275–308 (SLEELGALADPPLTKDAIAGRIRRLLALADKRAR) is a DNA-binding region (H-T-H motif).

It belongs to the WhiA family.

Its function is as follows. Involved in cell division and chromosome segregation. The polypeptide is Probable cell division protein WhiA (Salinispora tropica (strain ATCC BAA-916 / DSM 44818 / JCM 13857 / NBRC 105044 / CNB-440)).